The chain runs to 571 residues: Proline--tRNA ligase (571 aa).

It belongs to the class-II aminoacyl-tRNA synthetase family. ProS type 1 subfamily. Homodimer.

The protein localises to the cytoplasm. It carries out the reaction tRNA(Pro) + L-proline + ATP = L-prolyl-tRNA(Pro) + AMP + diphosphate. Functionally, catalyzes the attachment of proline to tRNA(Pro) in a two-step reaction: proline is first activated by ATP to form Pro-AMP and then transferred to the acceptor end of tRNA(Pro). As ProRS can inadvertently accommodate and process non-cognate amino acids such as alanine and cysteine, to avoid such errors it has two additional distinct editing activities against alanine. One activity is designated as 'pretransfer' editing and involves the tRNA(Pro)-independent hydrolysis of activated Ala-AMP. The other activity is designated 'posttransfer' editing and involves deacylation of mischarged Ala-tRNA(Pro). The misacylated Cys-tRNA(Pro) is not edited by ProRS. In Pseudomonas paraeruginosa (strain DSM 24068 / PA7) (Pseudomonas aeruginosa (strain PA7)), this protein is Proline--tRNA ligase.